The chain runs to 61 residues: DNA-directed RNA polymerase subunit 12-like protein (61 aa).

Positions 21, 24, 38, and 41 each coordinate Zn(2+).

Belongs to the archaeal Rpo12/eukaryotic RPC10 RNA polymerase subunit family.

The protein localises to the nucleus. The chain is DNA-directed RNA polymerase subunit 12-like protein (NRPB12L) from Arabidopsis thaliana (Mouse-ear cress).